Reading from the N-terminus, the 144-residue chain is Histone H3.1 (144 aa).

The segment at 1–45 is disordered; that stretch reads MARTKQSARKTTGGKAPRKQLSAKSARKGVSPASSAGAKKSRYRP. Lysine 5 bears the N6,N6,N6-trimethyllysine; alternate mark. An N6,N6-dimethyllysine; alternate modification is found at lysine 5. 2 positions are modified to N6-methyllysine; alternate: lysine 5 and lysine 10. 6 positions are modified to N6-acetyllysine; alternate: lysine 10, lysine 15, lysine 19, lysine 24, lysine 28, and lysine 39. Lysine 15 carries the post-translational modification N6,N6-dimethyllysine; alternate. N6-methyllysine; alternate occurs at positions 19, 24, 28, and 39. An N6,N6,N6-trimethyllysine; alternate mark is found at lysine 28 and lysine 39. N6,N6-dimethyllysine; alternate occurs at positions 28 and 39. Position 58 is an N6-acetyllysine (lysine 58).

This sequence belongs to the histone H3 family. In terms of assembly, the nucleosome is a histone octamer containing two molecules each of H2A, H2B, H3 and H4 assembled in one H3-H4 heterotetramer and two H2A-H2B heterodimers. The octamer wraps approximately 147 bp of DNA. In terms of processing, mono-, di- and trimethylated to form H3K4me1/2/3. H3K4me activates gene expression by regulating transcription elongation and plays a role in telomere length maintenance. H3K4me enrichment correlates with transcription levels, and occurs in a 5' to 3' gradient with H3K4me3 enrichment at the 5'-end of genes, shifting to H3K4me2 and then H3K4me1. H3K36me represses gene expression. Acetylation of histone H3 leads to transcriptional activation.

Its subcellular location is the nucleus. It localises to the chromosome. Functionally, core component of nucleosome. Nucleosomes wrap and compact DNA into chromatin, limiting DNA accessibility to the cellular machineries which require DNA as a template. Histones thereby play a central role in transcription regulation, DNA repair, DNA replication and chromosomal stability. DNA accessibility is regulated via a complex set of post-translational modifications of histones, also called histone code, and nucleosome remodeling. The polypeptide is Histone H3.1 (HHT1) (Encephalitozoon cuniculi (strain GB-M1) (Microsporidian parasite)).